The following is a 610-amino-acid chain: Isocitrate dehydrogenase kinase/phosphatase (610 aa).

ATP-binding positions include 359-365 and Lys-380; that span reads APGFKGT. The active site involves Asp-419.

The protein belongs to the AceK family.

The protein resides in the cytoplasm. It carries out the reaction L-seryl-[isocitrate dehydrogenase] + ATP = O-phospho-L-seryl-[isocitrate dehydrogenase] + ADP + H(+). In terms of biological role, bifunctional enzyme which can phosphorylate or dephosphorylate isocitrate dehydrogenase (IDH) on a specific serine residue. This is a regulatory mechanism which enables bacteria to bypass the Krebs cycle via the glyoxylate shunt in response to the source of carbon. When bacteria are grown on glucose, IDH is fully active and unphosphorylated, but when grown on acetate or ethanol, the activity of IDH declines drastically concomitant with its phosphorylation. In Rhodopseudomonas palustris (strain ATCC BAA-98 / CGA009), this protein is Isocitrate dehydrogenase kinase/phosphatase.